The sequence spans 266 residues: Hemin import ATP-binding protein HmuV (266 aa).

The ABC transporter domain occupies 12-248 (LEANQLSYHV…ETLTRWYQAD (237 aa)). An ATP-binding site is contributed by 44–51 (GPNGAGKS).

Belongs to the ABC transporter superfamily. Heme (hemin) importer (TC 3.A.1.14.5) family. As to quaternary structure, the complex is composed of two ATP-binding proteins (HmuV), two transmembrane proteins (HmuU) and a solute-binding protein (HmuT).

It is found in the cell inner membrane. Its function is as follows. Part of the ABC transporter complex HmuTUV involved in hemin import. Responsible for energy coupling to the transport system. In Yersinia enterocolitica, this protein is Hemin import ATP-binding protein HmuV.